The primary structure comprises 537 residues: Glutamyl-tRNA reductase, chloroplastic (537 aa).

A chloroplast-targeting transit peptide spans 1 to 48 (MMASTTSATAAGGAFAAAKTRAGSSAAGGGACARVAAGGRRRSGVVVR). Substrate contacts are provided by residues 134–137 (TCNR), serine 194, 199–201 (EGQ), and glutamine 205. The active-site Nucleophile is cysteine 135. An NADP(+)-binding site is contributed by 276 to 281 (GAGKMG).

This sequence belongs to the glutamyl-tRNA reductase family.

It localises to the plastid. It is found in the chloroplast. The enzyme catalyses (S)-4-amino-5-oxopentanoate + tRNA(Glu) + NADP(+) = L-glutamyl-tRNA(Glu) + NADPH + H(+). It participates in porphyrin-containing compound metabolism; protoporphyrin-IX biosynthesis; 5-aminolevulinate from L-glutamyl-tRNA(Glu): step 1/2. Catalyzes the NADPH-dependent reduction of glutamyl-tRNA(Glu) to glutamate 1-semialdehyde (GSA). The polypeptide is Glutamyl-tRNA reductase, chloroplastic (Oryza sativa subsp. indica (Rice)).